The sequence spans 282 residues: Small ribosomal subunit protein uS2 (282 aa).

The disordered stretch occupies residues 260 to 282 (KRRRSKVYKEEEREVVTNEDESR). Residues 266 to 282 (VYKEEEREVVTNEDESR) are compositionally biased toward basic and acidic residues.

The protein belongs to the universal ribosomal protein uS2 family.

The polypeptide is Small ribosomal subunit protein uS2 (Wolbachia sp. subsp. Drosophila simulans (strain wRi)).